Here is a 475-residue protein sequence, read N- to C-terminus: RNA pseudouridine synthase 3, mitochondrial (475 aa).

A mitochondrion-targeting transit peptide spans 1–15 (MLCRRRRVGAAVRWL). The interval 40 to 74 (RLGKPKPGPRPRQLLSLPPFPGGGDGDPLPGRKAA) is disordered. The S4 RNA-binding domain occupies 90–160 (ADVPQEVVQA…GEIKKRYETI (71 aa)). Residue Asp230 is part of the active site.

This sequence belongs to the pseudouridine synthase RluA family.

The protein localises to the mitochondrion. The enzyme catalyses a uridine in RNA = a pseudouridine in RNA. In Oryza sativa subsp. japonica (Rice), this protein is RNA pseudouridine synthase 3, mitochondrial.